Here is a 196-residue protein sequence, read N- to C-terminus: Holliday junction branch migration complex subunit RuvA (196 aa).

The segment at 1 to 63 is domain I; the sequence is MIASVRGEVL…EDSMTLYGFP (63 aa). The interval 64 to 138 is domain II; that stretch reads DGETRDLFLT…DKVGVAATGG (75 aa). Residues 138–142 form a flexible linker region; that stretch reads GALST. Residues 143-196 are domain III; that stretch reads NGHAVRSPVVEALVGLGFAAKQAEEATDTVLAANHDATTSSALRSALSLLGKAR.

The protein belongs to the RuvA family. Homotetramer. Forms an RuvA(8)-RuvB(12)-Holliday junction (HJ) complex. HJ DNA is sandwiched between 2 RuvA tetramers; dsDNA enters through RuvA and exits via RuvB. An RuvB hexamer assembles on each DNA strand where it exits the tetramer. Each RuvB hexamer is contacted by two RuvA subunits (via domain III) on 2 adjacent RuvB subunits; this complex drives branch migration. In the full resolvosome a probable DNA-RuvA(4)-RuvB(12)-RuvC(2) complex forms which resolves the HJ.

The protein localises to the cytoplasm. Functionally, the RuvA-RuvB-RuvC complex processes Holliday junction (HJ) DNA during genetic recombination and DNA repair, while the RuvA-RuvB complex plays an important role in the rescue of blocked DNA replication forks via replication fork reversal (RFR). RuvA specifically binds to HJ cruciform DNA, conferring on it an open structure. The RuvB hexamer acts as an ATP-dependent pump, pulling dsDNA into and through the RuvAB complex. HJ branch migration allows RuvC to scan DNA until it finds its consensus sequence, where it cleaves and resolves the cruciform DNA. This Mycobacterium bovis (strain ATCC BAA-935 / AF2122/97) protein is Holliday junction branch migration complex subunit RuvA.